The sequence spans 93 residues: Small ribosomal subunit protein uS17 (93 aa).

Belongs to the universal ribosomal protein uS17 family. In terms of assembly, part of the 30S ribosomal subunit.

One of the primary rRNA binding proteins, it binds specifically to the 5'-end of 16S ribosomal RNA. The polypeptide is Small ribosomal subunit protein uS17 (Corynebacterium kroppenstedtii (strain DSM 44385 / JCM 11950 / CIP 105744 / CCUG 35717)).